The sequence spans 390 residues: Chorismate synthase 1 (390 aa).

NADP(+) is bound by residues R39 and R45. The tract at residues 95 to 117 (EQEEKEMKRKVTKPRPGHADLNG) is disordered. FMN is bound by residues 132–134 (RSS), 253–254 (NA), G298, 313–317 (KPIPT), and R339.

This sequence belongs to the chorismate synthase family. In terms of assembly, homotetramer. The cofactor is FMNH2.

The catalysed reaction is 5-O-(1-carboxyvinyl)-3-phosphoshikimate = chorismate + phosphate. It functions in the pathway metabolic intermediate biosynthesis; chorismate biosynthesis; chorismate from D-erythrose 4-phosphate and phosphoenolpyruvate: step 7/7. Its function is as follows. Catalyzes the anti-1,4-elimination of the C-3 phosphate and the C-6 proR hydrogen from 5-enolpyruvylshikimate-3-phosphate (EPSP) to yield chorismate, which is the branch point compound that serves as the starting substrate for the three terminal pathways of aromatic amino acid biosynthesis. This reaction introduces a second double bond into the aromatic ring system. This is Chorismate synthase 1 from Bacillus cereus (strain ATCC 14579 / DSM 31 / CCUG 7414 / JCM 2152 / NBRC 15305 / NCIMB 9373 / NCTC 2599 / NRRL B-3711).